We begin with the raw amino-acid sequence, 388 residues long: Succinate--CoA ligase [ADP-forming] subunit beta (388 aa).

The ATP-grasp domain maps to 9–244; sequence KQLFARYGLP…QSQEDPREAQ (236 aa). Residues K46, 53-55, E99, T102, and E107 contribute to the ATP site; that span reads GRG. Mg(2+) contacts are provided by N199 and D213. Residues N264 and 321–323 contribute to the substrate site; that span reads GIV.

This sequence belongs to the succinate/malate CoA ligase beta subunit family. As to quaternary structure, heterotetramer of two alpha and two beta subunits. Requires Mg(2+) as cofactor.

The enzyme catalyses succinate + ATP + CoA = succinyl-CoA + ADP + phosphate. It carries out the reaction GTP + succinate + CoA = succinyl-CoA + GDP + phosphate. Its pathway is carbohydrate metabolism; tricarboxylic acid cycle; succinate from succinyl-CoA (ligase route): step 1/1. Its function is as follows. Succinyl-CoA synthetase functions in the citric acid cycle (TCA), coupling the hydrolysis of succinyl-CoA to the synthesis of either ATP or GTP and thus represents the only step of substrate-level phosphorylation in the TCA. The beta subunit provides nucleotide specificity of the enzyme and binds the substrate succinate, while the binding sites for coenzyme A and phosphate are found in the alpha subunit. The protein is Succinate--CoA ligase [ADP-forming] subunit beta of Salmonella arizonae (strain ATCC BAA-731 / CDC346-86 / RSK2980).